The following is a 134-amino-acid chain: Small ribosomal subunit protein uS8c (134 aa).

It belongs to the universal ribosomal protein uS8 family. As to quaternary structure, part of the 30S ribosomal subunit.

The protein localises to the plastid. Its subcellular location is the chloroplast. Functionally, one of the primary rRNA binding proteins, it binds directly to 16S rRNA central domain where it helps coordinate assembly of the platform of the 30S subunit. The chain is Small ribosomal subunit protein uS8c (rps8) from Aethionema grandiflorum (Persian stone-cress).